The sequence spans 246 residues: Anamorsin homolog (246 aa).

An N-terminal SAM-like domain region spans residues 1–124; that stretch reads MRVVVVDLDG…ARGTAFSLKS (124 aa). Residues 125–158 are linker; sequence RAVRVVTADAGWGADADVDDELIDESALLTELDV. Residues cysteine 168, cysteine 177, cysteine 180, and cysteine 182 each contribute to the [2Fe-2S] cluster site. Positions 168–182 are fe-S binding site A; sequence CDVGAGKKACKNCTC. Residues cysteine 206, cysteine 209, cysteine 217, and cysteine 220 each contribute to the [4Fe-4S] cluster site. 2 consecutive short sequence motifs (cx2C motif) follow at residues 206–209 and 217–220; these read CGNC and CAGC. Residues 206-220 are fe-S binding site B; the sequence is CGNCALGDAFRCAGC.

Belongs to the anamorsin family. Monomer. [2Fe-2S] cluster is required as a cofactor. Requires [4Fe-4S] cluster as cofactor.

It is found in the cytoplasm. It localises to the mitochondrion intermembrane space. Functionally, component of the cytosolic iron-sulfur (Fe-S) protein assembly (CIA) machinery. Required for the maturation of extramitochondrial Fe-S proteins. Part of an electron transfer chain functioning in an early step of cytosolic Fe-S biogenesis, facilitating the de novo assembly of a [4Fe-4S] cluster on the cytosolic Fe-S scaffold complex. Electrons are transferred from NADPH via a FAD- and FMN-containing diflavin oxidoreductase. Together with the diflavin oxidoreductase, also required for the assembly of the diferric tyrosyl radical cofactor of ribonucleotide reductase (RNR), probably by providing electrons for reduction during radical cofactor maturation in the catalytic small subunit. This is Anamorsin homolog from Ostreococcus tauri.